A 242-amino-acid polypeptide reads, in one-letter code: Pyridoxine 5'-phosphate synthase (242 aa).

Asn6 contacts 3-amino-2-oxopropyl phosphate. 1-deoxy-D-xylulose 5-phosphate is bound at residue 8–9 (DH). Arg17 is a binding site for 3-amino-2-oxopropyl phosphate. The active-site Proton acceptor is the His42. 2 residues coordinate 1-deoxy-D-xylulose 5-phosphate: Arg44 and His49. The active-site Proton acceptor is Glu69. Thr99 contributes to the 1-deoxy-D-xylulose 5-phosphate binding site. His190 serves as the catalytic Proton donor. 3-amino-2-oxopropyl phosphate is bound by residues Gly191 and 212–213 (GH).

Belongs to the PNP synthase family. As to quaternary structure, homooctamer; tetramer of dimers.

It is found in the cytoplasm. It carries out the reaction 3-amino-2-oxopropyl phosphate + 1-deoxy-D-xylulose 5-phosphate = pyridoxine 5'-phosphate + phosphate + 2 H2O + H(+). The protein operates within cofactor biosynthesis; pyridoxine 5'-phosphate biosynthesis; pyridoxine 5'-phosphate from D-erythrose 4-phosphate: step 5/5. Catalyzes the complicated ring closure reaction between the two acyclic compounds 1-deoxy-D-xylulose-5-phosphate (DXP) and 3-amino-2-oxopropyl phosphate (1-amino-acetone-3-phosphate or AAP) to form pyridoxine 5'-phosphate (PNP) and inorganic phosphate. The polypeptide is Pyridoxine 5'-phosphate synthase (Neisseria meningitidis serogroup A / serotype 4A (strain DSM 15465 / Z2491)).